A 193-amino-acid chain; its full sequence is uncharacterized protein (193 aa).

Residue R8 participates in substrate binding. Catalysis depends on H9, which acts as the Tele-phosphohistidine intermediate. 3 residues coordinate substrate: N15, Q21, and R58. E82 serves as the catalytic Proton donor/acceptor. Residue H139 coordinates substrate.

It belongs to the phosphoglycerate mutase family. GpmB subfamily.

In terms of biological role, phosphatase with broad substrate specificity. Does not have phosphoglycerate mutase activity. This is an uncharacterized protein from Bacillus subtilis (strain 168).